The following is a 573-amino-acid chain: Mucin-13 (573 aa).

Positions 1–17 (MKGFLLLSLSLLLVTVG) are cleaved as a signal peptide. Residues 16-234 (VGSSSQASST…VPSGGSTGPS (219 aa)) are compositionally biased toward low complexity. Residues 16–237 (VGSSSQASST…GGSTGPSDLC (222 aa)) are disordered. The Extracellular segment spans residues 18-480 (SSSQASSTTS…FGYSGMNCKD (463 aa)). Positions 233-273 (PSDLCNPNPCKGTASCVKLHSKHFCLCLEGYYYNSSLSSCV) constitute an EGF-like 1 domain. Disulfide bonds link Cys237–Cys248, Cys242–Cys257, and Cys259–Cys272. Asn266, Asn316, and Asn397 each carry an N-linked (GlcNAc...) asparagine glycan. The SEA domain occupies 274 to 391 (KGTTFPGDIS…DYVSINLCDH (118 aa)). 2 EGF-like domains span residues 385-425 (SINL…PFCV) and 425-467 (VAVT…RKCE). 6 disulfides stabilise this stretch: Cys389-Cys402, Cys394-Cys408, Cys410-Cys424, Cys429-Cys441, Cys433-Cys451, and Cys453-Cys466. The chain crosses the membrane as a helical span at residues 481–508 (QFQLILTIVGTIAGALILILLIAFIVSA). Residues 509 to 573 (RSKNKKKDGE…NQRSMPRPDY (65 aa)) lie on the Cytoplasmic side of the membrane. Residues 548-573 (PKVRTGVPSQTPNPYANQRSMPRPDY) are disordered. Over residues 554–567 (VPSQTPNPYANQRS) the composition is skewed to polar residues.

In terms of assembly, homodimer of beta subunits. Cleaved into two subunits, alpha and beta, probably between the first EGF domain and the SEA domain. Beta subunit contains the cytoplasmic tail and alpha subunit the extracellular tail. The homooligomerization into dimers is dependent on intrachain disulfide bonds. Post-translationally, highly N-glycosylated.

It localises to the cell membrane. The protein resides in the secreted. In terms of biological role, epithelial and hemopoietic transmembrane mucin that may play a role in cell signaling. The protein is Mucin-13 (Muc13) of Mus musculus (Mouse).